We begin with the raw amino-acid sequence, 538 residues long: Importin subunit alpha-4 (538 aa).

An IBB domain is found at 1-58; the sequence is MSLRPSTRAELRKKIYKTGVDADEARRRREDNLVEIRKNKREDSLLKKRREGMMLQQQ. ARM repeat units lie at residues 112–152, 155–194, 197–237, 239–278, 281–320, 323–363, 366–405, and 409–448; these read SPPI…NVAS, SDHT…NVAG, PNCR…NFCR, KPPT…YLSD, NDKI…NIVT, DSQT…NITA, KLQI…NATS, and HEQI…NILK.

Belongs to the importin alpha family. As to quaternary structure, forms a complex with importin subunit beta-1. Interacts with A.tumefaciens VirD2 and VirE2.

The protein resides in the nucleus envelope. In terms of biological role, binds to conventional NLS motifs and mediates nuclear protein import across the nuclear envelope. Acts as a cellular receptor for the nuclear import of the virD2 protein of Agrobacterium and is essential for Agrobacterium-mediated root transformation. This Arabidopsis thaliana (Mouse-ear cress) protein is Importin subunit alpha-4.